A 228-amino-acid polypeptide reads, in one-letter code: Ribose-5-phosphate isomerase A (228 aa).

Substrate-binding positions include 26–29 (SGST), 81–84 (DGAD), and 94–97 (KGGG). Glu-103 functions as the Proton acceptor in the catalytic mechanism. Residue Lys-121 coordinates substrate.

The protein belongs to the ribose 5-phosphate isomerase family. As to quaternary structure, homodimer.

It carries out the reaction aldehydo-D-ribose 5-phosphate = D-ribulose 5-phosphate. Its pathway is carbohydrate degradation; pentose phosphate pathway; D-ribose 5-phosphate from D-ribulose 5-phosphate (non-oxidative stage): step 1/1. Its function is as follows. Catalyzes the reversible conversion of ribose-5-phosphate to ribulose 5-phosphate. The sequence is that of Ribose-5-phosphate isomerase A from Shouchella clausii (strain KSM-K16) (Alkalihalobacillus clausii).